Reading from the N-terminus, the 62-residue chain is Conotoxin Gm5.2 (62 aa).

An N-terminal signal peptide occupies residues 1–22 (MRCLPVFVILLLLIASAPSVDA). Residues 23–49 (QPKTKDDVPLAPLHDNIRSTLQTLRKK) constitute a propeptide that is removed on maturation. Ser60 is modified (serine amide).

This sequence belongs to the conotoxin T superfamily. Contains 2 disulfide bonds that can be either 'C1-C3, C2-C4' or 'C1-C4, C2-C3', since these disulfide connectivities have been observed for conotoxins with cysteine framework V (for examples, see AC P0DQQ7 and AC P81755). Expressed by the venom duct.

It is found in the secreted. The protein is Conotoxin Gm5.2 of Conus gloriamaris (Glory-of-the-Sea cone).